The chain runs to 396 residues: Probable protein phosphatase 2C 25 (396 aa).

Positions 32–98 (ESLSLTLSHR…SPPGGVLKRK (67 aa)) are disordered. A compositionally biased stretch (low complexity) spans 44–61 (QTSSPSSPSTTVSSPKSP). Residues 139 to 392 (GYSVYCKRGR…DDISVMLIPL (254 aa)) form the PPM-type phosphatase domain. Mn(2+) contacts are provided by aspartate 175, glycine 176, aspartate 338, and aspartate 383.

Belongs to the PP2C family. As to quaternary structure, interacts with MPK4 and MPK6. Requires Mg(2+) as cofactor. Mn(2+) is required as a cofactor.

It localises to the cytoplasm. Its subcellular location is the nucleus. It carries out the reaction O-phospho-L-seryl-[protein] + H2O = L-seryl-[protein] + phosphate. It catalyses the reaction O-phospho-L-threonyl-[protein] + H2O = L-threonyl-[protein] + phosphate. In terms of biological role, protein phosphatase that negatively regulates defense respones. Inactivates MPK4 and MPK6 MAP kinases involved in stress and defense signaling. The sequence is that of Probable protein phosphatase 2C 25 from Arabidopsis thaliana (Mouse-ear cress).